We begin with the raw amino-acid sequence, 108 residues long: Phosphoribosyl-ATP pyrophosphatase (108 aa).

This sequence belongs to the PRA-PH family.

The protein resides in the cytoplasm. It carries out the reaction 1-(5-phospho-beta-D-ribosyl)-ATP + H2O = 1-(5-phospho-beta-D-ribosyl)-5'-AMP + diphosphate + H(+). It participates in amino-acid biosynthesis; L-histidine biosynthesis; L-histidine from 5-phospho-alpha-D-ribose 1-diphosphate: step 2/9. The protein is Phosphoribosyl-ATP pyrophosphatase of Geobacter sulfurreducens (strain ATCC 51573 / DSM 12127 / PCA).